We begin with the raw amino-acid sequence, 506 residues long: Bifunctional purine biosynthesis protein PurH (506 aa).

Positions 1–142 (MRAIISVYRK…KNFFRVVILV (142 aa)) constitute an MGS-like domain.

Belongs to the PurH family.

It carries out the reaction (6R)-10-formyltetrahydrofolate + 5-amino-1-(5-phospho-beta-D-ribosyl)imidazole-4-carboxamide = 5-formamido-1-(5-phospho-D-ribosyl)imidazole-4-carboxamide + (6S)-5,6,7,8-tetrahydrofolate. The enzyme catalyses IMP + H2O = 5-formamido-1-(5-phospho-D-ribosyl)imidazole-4-carboxamide. The protein operates within purine metabolism; IMP biosynthesis via de novo pathway; 5-formamido-1-(5-phospho-D-ribosyl)imidazole-4-carboxamide from 5-amino-1-(5-phospho-D-ribosyl)imidazole-4-carboxamide (10-formyl THF route): step 1/1. It functions in the pathway purine metabolism; IMP biosynthesis via de novo pathway; IMP from 5-formamido-1-(5-phospho-D-ribosyl)imidazole-4-carboxamide: step 1/1. This chain is Bifunctional purine biosynthesis protein PurH, found in Aquifex aeolicus (strain VF5).